Consider the following 392-residue polypeptide: Bifunctional enzyme Fae/Hps (392 aa).

Residues 1 to 161 (MFQIGEALMG…EESNKSTHAI (161 aa)) form a formaldehyde-activating enzyme region. The active-site Proton donor is His17. Asp19, Leu48, Lys66, Thr68, and Gln83 together coordinate substrate. The 3-hexulose-6-phosphate synthase stretch occupies residues 162–392 (MGFKVTRLWD…IDQFRVMTDF (231 aa)).

This sequence in the N-terminal section; belongs to the formaldehyde-activating enzyme family. The protein in the C-terminal section; belongs to the HPS/KGPDC family. HPS subfamily.

The catalysed reaction is 5,6,7,8-tetrahydromethanopterin + formaldehyde = 5,10-methylenetetrahydromethanopterin + H2O. It catalyses the reaction D-ribulose 5-phosphate + formaldehyde = D-arabino-hex-3-ulose 6-phosphate. The protein operates within carbohydrate biosynthesis; D-ribose 5-phosphate biosynthesis. Its function is as follows. Catalyzes the condensation of formaldehyde with tetrahydromethanopterin (H(4)MPT) to 5,10-methylenetetrahydromethanopterin. Functionally, catalyzes the reversible formation of ribulose-5-phosphate and formaldehyde from 3-hexulose-6-phosphate. This chain is Bifunctional enzyme Fae/Hps, found in Methanosarcina acetivorans (strain ATCC 35395 / DSM 2834 / JCM 12185 / C2A).